Consider the following 384-residue polypeptide: GTPase Obg (384 aa).

Residues 1-159 enclose the Obg domain; the sequence is MKFIDEAKIE…RSLQLELKVL (159 aa). The tract at residues 20–46 is disordered; that stretch reads ATSFRREKFVPRGGPDGGDGGKGGSVW. A compositionally biased stretch (gly residues) spans 33 to 43; the sequence is GPDGGDGGKGG. In terms of domain architecture, OBG-type G spans 160-348; sequence ADVGLLGMPN…LVHQINQYLT (189 aa). GTP-binding positions include 166-173, 191-195, 213-216, 284-287, and 329-331; these read GMPNAGKS, FTTLH, DIPG, NKLD, and SAL. The Mg(2+) site is built by serine 173 and threonine 193.

The protein belongs to the TRAFAC class OBG-HflX-like GTPase superfamily. OBG GTPase family. Monomer. It depends on Mg(2+) as a cofactor.

It is found in the cytoplasm. An essential GTPase which binds GTP, GDP and possibly (p)ppGpp with moderate affinity, with high nucleotide exchange rates and a fairly low GTP hydrolysis rate. Plays a role in control of the cell cycle, stress response, ribosome biogenesis and in those bacteria that undergo differentiation, in morphogenesis control. In Neisseria meningitidis serogroup B (strain ATCC BAA-335 / MC58), this protein is GTPase Obg.